The following is a 149-amino-acid chain: Large ribosomal subunit protein bL9 (149 aa).

This sequence belongs to the bacterial ribosomal protein bL9 family.

Its function is as follows. Binds to the 23S rRNA. The polypeptide is Large ribosomal subunit protein bL9 (Thiobacillus denitrificans (strain ATCC 25259 / T1)).